A 128-amino-acid chain; its full sequence is UPF0325 protein NT01EI_0832 (128 aa).

Belongs to the UPF0325 family.

This Edwardsiella ictaluri (strain 93-146) protein is UPF0325 protein NT01EI_0832.